Reading from the N-terminus, the 204-residue chain is ATP phosphoribosyltransferase (204 aa).

This sequence belongs to the ATP phosphoribosyltransferase family. Short subfamily. Heteromultimer composed of HisG and HisZ subunits.

Its subcellular location is the cytoplasm. It catalyses the reaction 1-(5-phospho-beta-D-ribosyl)-ATP + diphosphate = 5-phospho-alpha-D-ribose 1-diphosphate + ATP. It participates in amino-acid biosynthesis; L-histidine biosynthesis; L-histidine from 5-phospho-alpha-D-ribose 1-diphosphate: step 1/9. Catalyzes the condensation of ATP and 5-phosphoribose 1-diphosphate to form N'-(5'-phosphoribosyl)-ATP (PR-ATP). Has a crucial role in the pathway because the rate of histidine biosynthesis seems to be controlled primarily by regulation of HisG enzymatic activity. This Staphylococcus aureus (strain USA300) protein is ATP phosphoribosyltransferase.